A 529-amino-acid chain; its full sequence is Peptide chain release factor 3 (529 aa).

The region spanning 11-279 is the tr-type G domain; sequence AKRRTFAIIS…GLVDWAPKPQ (269 aa). GTP is bound by residues 20–27, 88–92, and 142–145; these read SHPDAGKT, DTPGH, and NKLD.

This sequence belongs to the TRAFAC class translation factor GTPase superfamily. Classic translation factor GTPase family. PrfC subfamily.

It is found in the cytoplasm. Functionally, increases the formation of ribosomal termination complexes and stimulates activities of RF-1 and RF-2. It binds guanine nucleotides and has strong preference for UGA stop codons. It may interact directly with the ribosome. The stimulation of RF-1 and RF-2 is significantly reduced by GTP and GDP, but not by GMP. The polypeptide is Peptide chain release factor 3 (Idiomarina loihiensis (strain ATCC BAA-735 / DSM 15497 / L2-TR)).